Reading from the N-terminus, the 293-residue chain is uncharacterized protein (293 aa).

The stretch at 65 to 89 (LQKYLENIKNKKLNLNKQSNNQTNN) forms a coiled coil. A disordered region spans residues 81-112 (KQSNNQTNNQTNNQTNNQTNNQTNNIRPQINN).

The protein localises to the virion. This is an uncharacterized protein from Acanthamoeba polyphaga mimivirus (APMV).